Here is a 158-residue protein sequence, read N- to C-terminus: NAD(P)H-quinone oxidoreductase subunit N (158 aa).

The protein belongs to the complex I NdhN subunit family. NDH-1 can be composed of about 15 different subunits; different subcomplexes with different compositions have been identified which probably have different functions.

The protein resides in the cellular thylakoid membrane. The catalysed reaction is a plastoquinone + NADH + (n+1) H(+)(in) = a plastoquinol + NAD(+) + n H(+)(out). The enzyme catalyses a plastoquinone + NADPH + (n+1) H(+)(in) = a plastoquinol + NADP(+) + n H(+)(out). In terms of biological role, NDH-1 shuttles electrons from an unknown electron donor, via FMN and iron-sulfur (Fe-S) centers, to quinones in the respiratory and/or the photosynthetic chain. The immediate electron acceptor for the enzyme in this species is believed to be plastoquinone. Couples the redox reaction to proton translocation, and thus conserves the redox energy in a proton gradient. Cyanobacterial NDH-1 also plays a role in inorganic carbon-concentration. The protein is NAD(P)H-quinone oxidoreductase subunit N of Gloeothece citriformis (strain PCC 7424) (Cyanothece sp. (strain PCC 7424)).